We begin with the raw amino-acid sequence, 267 residues long: MGTPILDAFNVRVEGSGDKYLVFAHGFGTDQSAWQRVLPYFTRSYKVILYDLVCAGSVNPDHFDFRRYTTLDAYVDDLLNILDSLHVTRCAYVGHSISAMTGMLASIRRPELFSKLILIGASPRFLNDGENYHGGFEQGEIEHVFSAMEANYEAWVNGFAPLAVGADVPTAVREFSRTLFNMRPDISLFVSRTVFNSDLRGILGLVNVPCCIMQTARDMSVPASVATYMKEHIGGKSTVQWLDTEGHLPHLSAPSYLAHQLEIALSQ.

Ser-96 functions as the Nucleophile in the catalytic mechanism. Catalysis depends on residues Asp-218 and His-247.

The protein belongs to the AB hydrolase superfamily.

Its subcellular location is the cytoplasm. The protein resides in the nucleus. Its function is as follows. Involved in strigolactone signaling pathway. Functions downstream of strigolactone synthesis, as a component of hormone signaling and as an enzyme that participates in the conversion of strigolactones to the bioactive form. Binds and hydrolyzes the synthetic strigolactone analog GR24 and its enantiomers in vitro. Forms a stable covalent complex with the D-ring of strigolactone, which is essential for hormone bioactivity. The D-ring is attached to His-247 of the catalytic triad. The hydrolysis of strigolactone into a covalently linked intermediate molecule is required to trigger strigolactone signaling. This mechanism defines RMS3 as a non-canonical hormone receptor with dual functions to generate and sense the active form of strigolactone. Strigolactones are hormones that inhibit tillering and shoot branching through the MAX-dependent pathway, contribute to the regulation of shoot architectural response to phosphate-limiting conditions and function as rhizosphere signal that stimulates hyphal branching of arbuscular mycorrhizal fungi and trigger seed germination of root parasitic weeds. This chain is Strigolactone esterase RMS3, found in Pisum sativum (Garden pea).